The primary structure comprises 396 residues: Putative 3-phosphoinositide-dependent protein kinase 2 (396 aa).

A compositionally biased stretch (polar residues) spans 1–11; sequence MVRTQTESSTP. A disordered region spans residues 1–53; sequence MVRTQTESSTPPGIPGGSRQGPAMDGTAAEPRPGAGSLQHAQPPPQPRKKRPE. In terms of domain architecture, Protein kinase spans 55 to 315; the sequence is FKFGKILGEG…YGPLKAHPFF (261 aa). ATP-binding positions include 65–67 and Lys-84; that span reads SFS. Residues 86–130 form a PIF-pocket region; that stretch reads LEKRHIIKENKVPYVTRERDVMSRLDHPFFVKLYFTFQDDEKLYF. ATP is bound by residues 133-135 and Glu-139; that span reads SYA. Asp-178 functions as the Proton acceptor in the catalytic mechanism. ATP contacts are provided by Glu-182 and Asp-196.

This sequence belongs to the protein kinase superfamily. AGC Ser/Thr protein kinase family. PDPK1 subfamily. In terms of processing, phosphorylated on tyrosine and serine/threonine.

The protein localises to the cytoplasm. Its subcellular location is the membrane. The enzyme catalyses L-seryl-[protein] + ATP = O-phospho-L-seryl-[protein] + ADP + H(+). It carries out the reaction L-threonyl-[protein] + ATP = O-phospho-L-threonyl-[protein] + ADP + H(+). Functionally, phosphorylates and activates not only PKB/AKT, but also PKA, PKC-zeta, RPS6KA1 and RPS6KB1. May play a general role in signaling processes and in development. This is Putative 3-phosphoinositide-dependent protein kinase 2 from Homo sapiens (Human).